The sequence spans 495 residues: MGGDGWPSDGHILLLIVLTVLTPPSLALYRLWIHPLRSYPGPRWWAIWRGPYILSNIRGNLVRDLQRLHQQFGPVVRIAPNELSFIVPEAASPIYTSNPEFPKDPMHLPPFHNGTPGILAADHAHHRRYRRLLAFSFSDKGLRHERSLIERSIDLLITQLHENCGQGPLDLALWFNWATFDIIGDLAFGDSFGCLENVQTHPWIASIQGNVKLIPILNAFRRYRLDGLLRLLGSRKLLEQRRRNAQFTTDQVDRRLKNSSTPRGDIWDAVLAQKPDGEPPMTRDEMISNASAIVLAGSETSATLLSGCTWLLLKNPSHLHQLTSRIRSQFTHASEIDSQSVSRVEGLQAVLEESLRLYPPVPMQSNRIVPQAGAYIAGGWVPGGTSVGLQQFVACRSSSNFHRPDEFLPERWQGQGEFAHDRREVSQPFSIGPRNCIGRQLAYVEMRLILVKLLWHFDLRLDTTRMKDTDWLAEQGIWILWDKKPLWVTLEPRNE.

A helical membrane pass occupies residues 12–32; that stretch reads ILLLIVLTVLTPPSLALYRLW. Residues Asn258 and Asn289 are each glycosylated (N-linked (GlcNAc...) asparagine). Residue Cys436 participates in heme binding.

It belongs to the cytochrome P450 family. Heme is required as a cofactor.

Its subcellular location is the membrane. The catalysed reaction is (1'S)-averantin + reduced [NADPH--hemoprotein reductase] + O2 = (1'S,5'R)-5'-hydroxyaverantin + oxidized [NADPH--hemoprotein reductase] + H2O. It carries out the reaction (1'S)-averantin + reduced [NADPH--hemoprotein reductase] + O2 = (1'S,5'S)-5'-hydroxyaverantin + oxidized [NADPH--hemoprotein reductase] + H2O + H(+). It participates in mycotoxin biosynthesis; aflatoxin biosynthesis. In terms of biological role, averantin hydroxylase; part of the gene cluster that mediates the biosynthesis of aflatoxins, a group of polyketide-derived furanocoumarins, and part of the most toxic and carcinogenic compounds among the known mycotoxins. The four major aflatoxins produced by A.parasiticus are aflatoxin B1 (AFB1), aflatoxin B2 (AFB2), aflatoxin G1 (AFG1) and aflatoxin G2 (AFG2). Within the aflatoxin pathway, the cytochrome P450 monooxygenase aflG catalyzes the hydroxylation of AVN to 5'hydroxyaverantin (HAVN). The biosynthesis of aflatoxins begins with the norsolorinic acid synthase aflC that combines a hexanoyl starter unit produced by the fatty acid synthase aflA/aflB and 7 malonyl-CoA extender units to synthesize the precursor NOR. The second step is the conversion of NOR to averantin and requires the norsolorinic acid ketoreductase aflD, which catalyzes the dehydration of norsolorinic acid to form (1'S)-averantin. The norsolorinic acid reductases aflE and aflF may also play a role in the conversion of NOR to AVN. The cytochrome P450 monooxygenase aflG then catalyzes the hydroxylation of AVN to 5'hydroxyaverantin (HAVN). The next step is performed by the 5'-hydroxyaverantin dehydrogenase aflH that transforms HAVN to 5'-oxoaverantin (OAVN) which is further converted to averufin (AVF) by aflK that plays a dual role in the pathway, as a 5'-oxoaverantin cyclase that mediates conversion of 5'-oxoaverantin, as well as a versicolorin B synthase in a later step in the pathway. The averufin oxidase aflI catalyzes the conversion of AVF to versiconal hemiacetal acetate (VHA). VHA is then the substrate for the versiconal hemiacetal acetate esterase aflJ to yield versiconal (VAL). Versicolorin B synthase aflK then converts VAL to versicolorin B (VERB) by closing the bisfuran ring of aflatoxin which is required for DNA-binding, thus giving to aflatoxin its activity as a mutagen. Then, the activity of the versicolorin B desaturase aflL leads to versicolorin A (VERA). A branch point starts from VERB since it can also be converted to dihydrodemethylsterigmatocystin (DMDHST), probably also by aflL, VERA being a precursor for aflatoxins B1 and G1, and DMDHST for aflatoxins B2 and G2. Next, the versicolorin reductase aflM and the cytochrome P450 monooxygenase aflN are involved in conversion of VERA to demethylsterigmatocystin (DMST). AflX and aflY seem also involved in this step, through probable aflX-mediated epoxide ring-opening step following versicolorin A oxidation and aflY-mediated Baeyer-Villiger oxidation required for the formation of the xanthone ring. The methyltransferase aflO then leads to the modification of DMST to sterigmatocystin (ST), and of DMDHST to dihydrosterigmatocystin (DHST). Both ST and DHST are then substrates of the O-methyltransferase aflP to yield O-methylsterigmatocystin (OMST) and dihydro-O-methylsterigmatocystin (DHOMST), respectively. Finally OMST is converted to aflatoxins B1 and G1, and DHOMST to aflatoxins B2 and G2, via the action of several enzymes including O-methylsterigmatocystin oxidoreductase aflQ, the cytochrome P450 monooxygenase aflU, but also the NADH-dependent flavin oxidoreductase nadA which is specifically required for the synthesis of AFG1. The polypeptide is Averantin hydroxylase (Aspergillus parasiticus (strain ATCC 56775 / NRRL 5862 / SRRC 143 / SU-1)).